An 89-amino-acid polypeptide reads, in one-letter code: Small ribosomal subunit protein uS14A (89 aa).

The protein belongs to the universal ribosomal protein uS14 family. Part of the 30S ribosomal subunit. Contacts proteins S3 and S10.

Binds 16S rRNA, required for the assembly of 30S particles and may also be responsible for determining the conformation of the 16S rRNA at the A site. The protein is Small ribosomal subunit protein uS14A of Listeria monocytogenes serovar 1/2a (strain ATCC BAA-679 / EGD-e).